Consider the following 130-residue polypeptide: Ribosome-binding factor A (130 aa).

This sequence belongs to the RbfA family. Monomer. Binds 30S ribosomal subunits, but not 50S ribosomal subunits or 70S ribosomes.

The protein resides in the cytoplasm. Its function is as follows. One of several proteins that assist in the late maturation steps of the functional core of the 30S ribosomal subunit. Associates with free 30S ribosomal subunits (but not with 30S subunits that are part of 70S ribosomes or polysomes). Required for efficient processing of 16S rRNA. May interact with the 5'-terminal helix region of 16S rRNA. In Alkalilimnicola ehrlichii (strain ATCC BAA-1101 / DSM 17681 / MLHE-1), this protein is Ribosome-binding factor A.